Consider the following 310-residue polypeptide: Nucleotide-binding protein BLA_1368 (310 aa).

Residues 1-21 are disordered; sequence MQSARNEQRGTGPESPHAASP. 32–39 contacts ATP; that stretch reads GMSGAGRS. A GTP-binding site is contributed by 83–86; sequence DVRS.

This sequence belongs to the RapZ-like family.

Its function is as follows. Displays ATPase and GTPase activities. The chain is Nucleotide-binding protein BLA_1368 from Bifidobacterium animalis subsp. lactis (strain AD011).